The chain runs to 407 residues: Phosphopentomutase (407 aa).

Positions 10, 306, 311, 347, 348, and 359 each coordinate Mn(2+).

This sequence belongs to the phosphopentomutase family. Requires Mn(2+) as cofactor.

The protein localises to the cytoplasm. It carries out the reaction 2-deoxy-alpha-D-ribose 1-phosphate = 2-deoxy-D-ribose 5-phosphate. It catalyses the reaction alpha-D-ribose 1-phosphate = D-ribose 5-phosphate. Its pathway is carbohydrate degradation; 2-deoxy-D-ribose 1-phosphate degradation; D-glyceraldehyde 3-phosphate and acetaldehyde from 2-deoxy-alpha-D-ribose 1-phosphate: step 1/2. In terms of biological role, isomerase that catalyzes the conversion of deoxy-ribose 1-phosphate (dRib-1-P) and ribose 1-phosphate (Rib-1-P) to deoxy-ribose 5-phosphate (dRib-5-P) and ribose 5-phosphate (Rib-5-P), respectively. The sequence is that of Phosphopentomutase from Enterobacter sp. (strain 638).